We begin with the raw amino-acid sequence, 90 residues long: c-Myc-binding protein homolog (90 aa).

The protein belongs to the AMY1 family.

Its subcellular location is the nucleus. This Dictyostelium discoideum (Social amoeba) protein is c-Myc-binding protein homolog (mycbp).